A 207-amino-acid polypeptide reads, in one-letter code: Probable GTP-binding protein EngB (207 aa).

Residues 24–199 (GGYEVAFAGR…RAIVGAWLGL (176 aa)) enclose the EngB-type G domain. GTP is bound by residues 32–39 (GRSNAGKS), 59–63 (GRTQQ), 77–80 (DLPG), 144–147 (TKAD), and 178–180 (YSG). Mg(2+) is bound by residues serine 39 and threonine 61.

It belongs to the TRAFAC class TrmE-Era-EngA-EngB-Septin-like GTPase superfamily. EngB GTPase family. Mg(2+) serves as cofactor.

Necessary for normal cell division and for the maintenance of normal septation. This is Probable GTP-binding protein EngB from Xanthomonas euvesicatoria pv. vesicatoria (strain 85-10) (Xanthomonas campestris pv. vesicatoria).